Reading from the N-terminus, the 229-residue chain is Ribonuclease 3 (229 aa).

An RNase III domain is found at 5–127 (LSRLERQLGY…LIGAIYLDAG (123 aa)). Glu-40 is a Mg(2+) binding site. Asp-44 is an active-site residue. Mg(2+) contacts are provided by Asp-113 and Glu-116. Glu-116 is an active-site residue. The 71-residue stretch at 154–224 (DPKTRLQEFL…AAAALIALGV (71 aa)) folds into the DRBM domain.

Belongs to the ribonuclease III family. As to quaternary structure, homodimer. Mg(2+) is required as a cofactor.

The protein resides in the cytoplasm. It carries out the reaction Endonucleolytic cleavage to 5'-phosphomonoester.. Digests double-stranded RNA. Involved in the processing of primary rRNA transcript to yield the immediate precursors to the large and small rRNAs (23S and 16S). Processes some mRNAs, and tRNAs when they are encoded in the rRNA operon. Processes pre-crRNA and tracrRNA of type II CRISPR loci if present in the organism. The protein is Ribonuclease 3 of Pseudomonas fluorescens (strain Pf0-1).